Consider the following 197-residue polypeptide: Imidazoleglycerol-phosphate dehydratase (197 aa).

The protein belongs to the imidazoleglycerol-phosphate dehydratase family.

It is found in the cytoplasm. It catalyses the reaction D-erythro-1-(imidazol-4-yl)glycerol 3-phosphate = 3-(imidazol-4-yl)-2-oxopropyl phosphate + H2O. Its pathway is amino-acid biosynthesis; L-histidine biosynthesis; L-histidine from 5-phospho-alpha-D-ribose 1-diphosphate: step 6/9. The sequence is that of Imidazoleglycerol-phosphate dehydratase from Clostridium acetobutylicum (strain ATCC 824 / DSM 792 / JCM 1419 / IAM 19013 / LMG 5710 / NBRC 13948 / NRRL B-527 / VKM B-1787 / 2291 / W).